The following is a 479-amino-acid chain: Caspase-8 (479 aa).

Residues 1–216 (MDFSRNLYDI…TISDSPREQD (216 aa)) constitute a propeptide that is removed on maturation. DED domains lie at 2–80 (DFSR…TYLN) and 100–177 (AYRV…IIND). A phosphoserine mark is found at Ser-188 and Ser-211. Position 224 is an N6-acetyllysine (Lys-224). His-317 is an active-site residue. Tyr-334 bears the Phosphotyrosine mark. Cys-360 is a catalytic residue. Residues 375–384 (SEEQPYLEMD) constitute a propeptide that is removed on maturation. A Phosphotyrosine; by SRC modification is found at Tyr-380. At Ser-387 the chain carries Phosphoserine; by CDK1. Arg-413 is modified ((Microbial infection) ADP-riboxanated arginine).

Belongs to the peptidase C14A family. In terms of assembly, heterotetramer that consists of two anti-parallel arranged heterodimers, each one formed by a 18 kDa (p18) and a 10 kDa (p10) subunit. Component of the death-induced signaling complex (DISC) composed of cell surface receptor FAS/CD95 or TNFRSF1A, adapter protein FADD and the CASP8 protease; recruitment of CASP8 to the complex is required for processing of CASP8 into the p18 and p10 subunits. Component of the AIM2 PANoptosome complex, a multiprotein complex that drives inflammatory cell death (PANoptosis). Interacts with CFLAR and PEA15. Interacts with TNFAIP8L2. Interacts with CASP8AP2. Interacts with RFFL and RNF34; negatively regulate CASP8 through proteasomal degradation. Interacts with NOL3; decreases CASP8 activity in a mitochondria localization- and phosphorylation-dependent manner and this interaction is dissociated by calcium. Interacts with UBR2ca. Interacts with RIPK1. Interacts with stimulated TNFRSF10B; this interaction is followed by CASP8 proteolytic cleavage and activation. Interacts (phosphorylated on Tyr-380) with PIK3R1. Interacts at the endoplasmic reticulum with a complex containing BCAP31, BAP29, BCL2 and/or BCL2L1. As to quaternary structure, (Microbial infection) Interacts with human cytomegalovirus/HHV-5 protein vICA/UL36; this interaction inhibits CASP8 activation. In terms of assembly, (Microbial infection) Interacts with NleF from pathogenic E.coli. (Microbial infection) Interacts with molluscum contagiosum virus protein MC160. As to quaternary structure, (Microbial infection) Interacts (via RIP homotypic interaction motif) with herpes simplex virus 1/HHV-1 protein RIR1/ICP6 (via RIP homotypic interaction motif); this interaction prevents necroptosis activation. In terms of assembly, (Microbial infection) Interacts (via RIP homotypic interaction motif) with herpes simplex virus 2/HHV-2 protein RIR1/ICP10 (via RIP homotypic interaction motif); this interaction prevents necroptosis activation. Generation of the p10 and p18 subunits requires association with the death-inducing signaling complex (DISC), whereas additional processing is likely due to the autocatalytic activity of the activated protease. GZMB and CASP10 can be involved in these processing events. Post-translationally, phosphorylation on Ser-387 during mitosis by CDK1 inhibits activation by proteolysis and prevents apoptosis. Phosphorylation on Tyr-380 by SRC is mediated by interaction with the SRC SH2 domain and does not affect dimerization or recruitment to the death-inducing signaling complex (DISC) but negatively regulates DISC-mediated processing and activation of CASP8, down-regulating its proapoptotic function. Phosphorylation on Tyr-380 also enhances localization to lamellipodia in migrating cells. In terms of processing, (Microbial infection) ADP-riboxanation by C.violaceum CopC blocks CASP8 processing, preventing CASP8 activation and ability to mediate extrinsic apoptosis. (Microbial infection) Proteolytically cleaved by the cowpox virus CRMA death inhibitory protein. In terms of tissue distribution, isoform 1, isoform 5 and isoform 7 are expressed in a wide variety of tissues. Highest expression in peripheral blood leukocytes, spleen, thymus and liver. Barely detectable in brain, testis and skeletal muscle.

Its subcellular location is the cytoplasm. The protein localises to the nucleus. It localises to the cell projection. It is found in the lamellipodium. The enzyme catalyses Strict requirement for Asp at position P1 and has a preferred cleavage sequence of (Leu/Asp/Val)-Glu-Thr-Asp-|-(Gly/Ser/Ala).. Its activity is regulated as follows. CASP8 activity is restricted by RIPK1. Inhibited by the effector protein NleF that is produced by pathogenic E.coli; this inhibits apoptosis. In terms of biological role, thiol protease that plays a key role in programmed cell death by acting as a molecular switch for apoptosis, necroptosis and pyroptosis, and is required to prevent tissue damage during embryonic development and adulthood. Initiator protease that induces extrinsic apoptosis by mediating cleavage and activation of effector caspases responsible for FAS/CD95-mediated and TNFRSF1A-induced cell death. Cleaves and activates effector caspases CASP3, CASP4, CASP6, CASP7, CASP9 and CASP10. Binding to the adapter molecule FADD recruits it to either receptor FAS/TNFRSF6 or TNFRSF1A. The resulting aggregate called the death-inducing signaling complex (DISC) performs CASP8 proteolytic activation. The active dimeric enzyme is then liberated from the DISC and free to activate downstream apoptotic proteases. Proteolytic fragments of the N-terminal propeptide (termed CAP3, CAP5 and CAP6) are likely retained in the DISC. In addition to extrinsic apoptosis, also acts as a negative regulator of necroptosis: acts by cleaving RIPK1 at 'Asp-324', which is crucial to inhibit RIPK1 kinase activity, limiting TNF-induced apoptosis, necroptosis and inflammatory response. Also able to initiate pyroptosis by mediating cleavage and activation of gasdermin-C and -D (GSDMC and GSDMD, respectively): gasdermin cleavage promotes release of the N-terminal moiety that binds to membranes and forms pores, triggering pyroptosis. Initiates pyroptosis following inactivation of MAP3K7/TAK1. Also acts as a regulator of innate immunity by mediating cleavage and inactivation of N4BP1 downstream of TLR3 or TLR4, thereby promoting cytokine production. May participate in the Granzyme B (GZMB) cell death pathways. Cleaves PARP1 and PARP2. Independent of its protease activity, promotes cell migration following phosphorylation at Tyr-380. Its function is as follows. Lacks the catalytic site and may interfere with the pro-apoptotic activity of the complex. Functionally, lacks the catalytic site and may interfere with the pro-apoptotic activity of the complex. Acts as an inhibitor of the caspase cascade. The protein is Caspase-8 of Homo sapiens (Human).